The chain runs to 229 residues: Potassium/proton antiporter CemA (229 aa).

3 helical membrane-spanning segments follow: residues 7–27 (FTPL…SLLF), 107–127 (ILHF…SILG), and 189–209 (IISG…KYWI).

The protein belongs to the CemA family.

It is found in the plastid. The protein localises to the chloroplast inner membrane. The enzyme catalyses K(+)(in) + H(+)(out) = K(+)(out) + H(+)(in). In terms of biological role, contributes to K(+)/H(+) antiport activity by supporting proton efflux to control proton extrusion and homeostasis in chloroplasts in a light-dependent manner to modulate photosynthesis. Prevents excessive induction of non-photochemical quenching (NPQ) under continuous-light conditions. Indirectly promotes efficient inorganic carbon uptake into chloroplasts. This Helianthus annuus (Common sunflower) protein is Potassium/proton antiporter CemA.